Consider the following 466-residue polypeptide: ATP synthase subunit beta (466 aa).

Position 148-155 (148-155 (GGAGVGKT)) interacts with ATP.

This sequence belongs to the ATPase alpha/beta chains family. F-type ATPases have 2 components, CF(1) - the catalytic core - and CF(0) - the membrane proton channel. CF(1) has five subunits: alpha(3), beta(3), gamma(1), delta(1), epsilon(1). CF(0) has three main subunits: a(1), b(2) and c(9-12). The alpha and beta chains form an alternating ring which encloses part of the gamma chain. CF(1) is attached to CF(0) by a central stalk formed by the gamma and epsilon chains, while a peripheral stalk is formed by the delta and b chains.

It is found in the cell inner membrane. The catalysed reaction is ATP + H2O + 4 H(+)(in) = ADP + phosphate + 5 H(+)(out). Produces ATP from ADP in the presence of a proton gradient across the membrane. The catalytic sites are hosted primarily by the beta subunits. The sequence is that of ATP synthase subunit beta from Xylella fastidiosa (strain M12).